The following is a 134-amino-acid chain: Interferon-induced transmembrane protein 5 (134 aa).

Residues methionine 1–alanine 20 are compositionally biased toward basic and acidic residues. The tract at residues methionine 1–proline 31 is disordered. At methionine 1–methionine 39 the chain is on the extracellular side. A helical membrane pass occupies residues leucine 40–valine 60. S-palmitoyl cysteine attachment occurs at residues cysteine 52, cysteine 53, and cysteine 86. The Cytoplasmic segment spans residues histidine 61–asparagine 88. The chain crosses the membrane as a helical span at residues isoleucine 89–glycine 109. The Extracellular portion of the chain corresponds to alanine 110–asparagine 134.

It belongs to the CD225/Dispanin family. As to quaternary structure, interacts with FKBP11. Post-translationally, palmitoylated. In terms of tissue distribution, detected in embryonic bone (at protein level). Highly expressed in osteoblasts of adults and embryos. Expressed in primitive hemopoietic cells.

Its subcellular location is the cell membrane. In terms of biological role, required for normal bone mineralization. The protein is Interferon-induced transmembrane protein 5 (Ifitm5) of Mus musculus (Mouse).